Consider the following 757-residue polypeptide: uncharacterized protein (757 aa).

Positions 640 to 709 constitute an S1 motif domain; that stretch reads GMILEGVVSN…ARKRIALTMR (70 aa). Residues 710–741 are compositionally biased toward basic and acidic residues; the sequence is LDDEPGGAKHKMPSENRSRERTAGRKPQRNDR. A disordered region spans residues 710-757; that stretch reads LDDEPGGAKHKMPSENRSRERTAGRKPQRNDRAPANSAMADAFAKLKR.

This is an uncharacterized protein from Neisseria meningitidis serogroup A / serotype 4A (strain DSM 15465 / Z2491).